A 651-amino-acid chain; its full sequence is Epithelial sodium channel subunit beta (651 aa).

The Cytoplasmic segment spans residues M1–T50. Residues L51–I71 traverse the membrane as a helical segment. Over Q72 to G541 the chain is Extracellular. 8 cysteine pairs are disulfide-bonded: C98–C281, C205–C212, C258–C265, C370–C457, C395–C453, C399–C449, C408–C435, and C410–C424. The helical transmembrane segment at S542 to I562 threads the bilayer. The Cytoplasmic segment spans residues R563 to L651. Residues Q612–L651 are disordered. The segment covering D633–L651 has biased composition (basic and acidic residues).

It belongs to the amiloride-sensitive sodium channel (TC 1.A.6) family. SCNN1B subfamily. Component of the heterotrimeric epithelial sodium channel (ENaC) composed of an alpha/SCNN1A, a beta/SCNN1B and a gamma/SCNN1G subunit. In terms of tissue distribution, strongly expressed in gill, kidney and rectum and more weakly in brain, eye, liver and muscle.

The protein localises to the apical cell membrane. It localises to the cytoplasmic vesicle membrane. It carries out the reaction Na(+)(in) = Na(+)(out). Its activity is regulated as follows. Originally identified and characterized by its inhibition by the diuretic drug amiloride. Functionally, this is one of the three pore-forming subunits of the heterotrimeric epithelial sodium channel (ENaC), a critical regulator of sodium balance and fluid homeostasis. ENaC operates in epithelial tissues, where it mediates the electrodiffusion of sodium ions from extracellular fluid through the apical membrane of cells, with water following osmotically. This chain is Epithelial sodium channel subunit beta, found in Neoceratodus forsteri (Australian lungfish).